Consider the following 335-residue polypeptide: Fructose-1,6-bisphosphatase class 1 (335 aa).

Positions 89, 112, 114, and 115 each coordinate Mg(2+). Substrate-binding positions include Asp-115–Ser-118, Asn-208, Tyr-241, and Lys-271. A Mg(2+)-binding site is contributed by Glu-277.

This sequence belongs to the FBPase class 1 family. As to quaternary structure, homotetramer. Mg(2+) is required as a cofactor.

It is found in the cytoplasm. The enzyme catalyses beta-D-fructose 1,6-bisphosphate + H2O = beta-D-fructose 6-phosphate + phosphate. Its pathway is carbohydrate biosynthesis; gluconeogenesis. The protein is Fructose-1,6-bisphosphatase class 1 of Proteus mirabilis (strain HI4320).